Reading from the N-terminus, the 235-residue chain is uncharacterized protein (235 aa).

2 disordered regions span residues 1 to 47 (MSHK…QSTN) and 78 to 128 (QEHH…KQPQ). A compositionally biased stretch (polar residues) spans 20–33 (HPPGQSLSSISWSP). Positions 84-98 (QQQQQQRQNIRSQNS) are enriched in low complexity. Positions 106–128 (VQESQWTSSASNSSLKKQEKQPQ) are enriched in polar residues.

This is an uncharacterized protein from Saccharomyces cerevisiae (strain ATCC 204508 / S288c) (Baker's yeast).